We begin with the raw amino-acid sequence, 50 residues long: Photosystem II reaction center protein M (50 aa).

A helical transmembrane segment spans residues Gly-7–Ile-27.

Belongs to the PsbM family. In terms of assembly, PSII is composed of 1 copy each of membrane proteins PsbA, PsbB, PsbC, PsbD, PsbE, PsbF, PsbH, PsbI, PsbJ, PsbK, PsbL, PsbM, PsbT, PsbX, PsbY, Psb30/Ycf12, peripheral proteins PsbO, CyanoQ (PsbQ), PsbU, PsbV and a large number of cofactors. It forms dimeric complexes.

The protein localises to the cellular thylakoid membrane. Its function is as follows. One of the components of the core complex of photosystem II (PSII). PSII is a light-driven water:plastoquinone oxidoreductase that uses light energy to abstract electrons from H(2)O, generating O(2) and a proton gradient subsequently used for ATP formation. It consists of a core antenna complex that captures photons, and an electron transfer chain that converts photonic excitation into a charge separation. This subunit is found at the monomer-monomer interface. The polypeptide is Photosystem II reaction center protein M (Prochlorococcus marinus (strain MIT 9301)).